Here is a 94-residue protein sequence, read N- to C-terminus: MTDAVGSIDMPDAQDEAPDSKKSRKGGKRGKKGPLKRLALFYRQIVAELRKVVWPSRNQLTTYTTVVIIFVVIMIGLVTLIDYGFSHAAKYVFG.

The interval 1 to 32 (MTDAVGSIDMPDAQDEAPDSKKSRKGGKRGKK) is disordered. Residues 22-32 (KSRKGGKRGKK) show a composition bias toward basic residues. Residues 65–85 (TVVIIFVVIMIGLVTLIDYGF) form a helical membrane-spanning segment.

It belongs to the SecE/SEC61-gamma family. As to quaternary structure, component of the Sec protein translocase complex. Heterotrimer consisting of SecY, SecE and SecG subunits. The heterotrimers can form oligomers, although 1 heterotrimer is thought to be able to translocate proteins. Interacts with the ribosome. Interacts with SecDF, and other proteins may be involved. Interacts with SecA.

It is found in the cell membrane. Essential subunit of the Sec protein translocation channel SecYEG. Clamps together the 2 halves of SecY. May contact the channel plug during translocation. In Streptomyces coelicolor (strain ATCC BAA-471 / A3(2) / M145), this protein is Protein translocase subunit SecE.